A 1308-amino-acid chain; its full sequence is Tau-tubulin kinase 1 (1308 aa).

One can recognise a Protein kinase domain in the interval 34–297; it reads WKVLKKIGGG…LIMSVFENSM (264 aa). ATP contacts are provided by residues 40–48 and Lys-63; that span reads IGGGGFGEI. Asp-154 serves as the catalytic Proton acceptor. 6 disordered regions span residues 364-397, 418-448, 474-671, 720-899, 985-1085, and 1097-1308; these read LSDQ…GPEA, PCVE…PVRS, ERRS…APPF, QVPL…AGGG, EMES…LARL, and RLAS…PGAR. Position 441 is a phosphoserine (Ser-441). The span at 485–496 shows a compositional bias: polar residues; it reads PSRQACSSQPAQ. Ser-541 is subject to Phosphoserine. Basic and acidic residues-rich tracts occupy residues 541–555 and 574–589; these read SKEW…ELKD and ELRP…RRLG. The segment covering 638 to 647 has biased composition (low complexity); that stretch reads SPSHSPLHSG. Residues 735–769 are compositionally biased toward acidic residues; the sequence is GEEEEEEEEEEEEEEEEEEEEEEEEEEEEEEEEEA. Over residues 786–795 the composition is skewed to basic and acidic residues; sequence GSERSTERSQ. Composition is skewed to polar residues over residues 868–885 and 1020–1035; these read PTGS…SSIL and ASQQ…TISP. Residues 1097 to 1107 are compositionally biased toward low complexity; sequence RLASGASSSSS.

It belongs to the protein kinase superfamily. CK1 Ser/Thr protein kinase family. Mg(2+) serves as cofactor. The cofactor is Mn(2+). As to expression, expressed in the brain. Strong expression in the cortical layers, the CA1 layers of the hippocampus and the granular layer of the cerebellum. Also expressed in the large cortical pyramidal cells in the temporal cortex, the CA1 pyramidal neurons and the cerebellum granular neurons.

The protein localises to the cytoplasm. The catalysed reaction is L-seryl-[protein] + ATP = O-phospho-L-seryl-[protein] + ADP + H(+). It carries out the reaction L-threonyl-[protein] + ATP = O-phospho-L-threonyl-[protein] + ADP + H(+). Functionally, serine/threonine kinase which is able to phosphorylate TAU on serine, threonine and tyrosine residues. Induces aggregation of TAU. The sequence is that of Tau-tubulin kinase 1 (Ttbk1) from Mus musculus (Mouse).